The following is a 207-amino-acid chain: Octanoyltransferase (207 aa).

A BPL/LPL catalytic domain is found at 29–204; sequence DDTADELWLV…ELMVQLGDEE (176 aa). Residues 68-75, 135-137, and 148-150 each bind substrate; these read RGGQVTYH, SLG, and GVA. The active-site Acyl-thioester intermediate is Cys166.

Belongs to the LipB family.

The protein localises to the cytoplasm. The catalysed reaction is octanoyl-[ACP] + L-lysyl-[protein] = N(6)-octanoyl-L-lysyl-[protein] + holo-[ACP] + H(+). Its pathway is protein modification; protein lipoylation via endogenous pathway; protein N(6)-(lipoyl)lysine from octanoyl-[acyl-carrier-protein]: step 1/2. Functionally, catalyzes the transfer of endogenously produced octanoic acid from octanoyl-acyl-carrier-protein onto the lipoyl domains of lipoate-dependent enzymes. Lipoyl-ACP can also act as a substrate although octanoyl-ACP is likely to be the physiological substrate. In Methylococcus capsulatus (strain ATCC 33009 / NCIMB 11132 / Bath), this protein is Octanoyltransferase.